Consider the following 432-residue polypeptide: uncharacterized protein (432 aa).

At Lys243 the chain carries N6-(pyridoxal phosphate)lysine.

This sequence belongs to the class-II pyridoxal-phosphate-dependent aminotransferase family. Requires pyridoxal 5'-phosphate as cofactor.

The protein localises to the cytoplasm. This is an uncharacterized protein from Methanocaldococcus jannaschii (strain ATCC 43067 / DSM 2661 / JAL-1 / JCM 10045 / NBRC 100440) (Methanococcus jannaschii).